A 63-amino-acid chain; its full sequence is Large ribosomal subunit protein bL28 (63 aa).

This sequence belongs to the bacterial ribosomal protein bL28 family.

This chain is Large ribosomal subunit protein bL28, found in Desulfatibacillum aliphaticivorans.